The sequence spans 530 residues: Tyrosinase (530 aa).

Positions 1–17 (MLLAALYCLLWSFRTSA) are cleaved as a signal peptide. Topologically, residues 19–473 (HFPRACASSK…IKPYLEQAQR (455 aa)) are lumenal, melanosome. N86 carries an N-linked (GlcNAc...) asparagine glycan. The Cu cation site is built by H180, H202, and H211. N-linked (GlcNAc...) asparagine glycosylation is found at N230, N290, and N337. 2 residues coordinate Cu cation: H363 and H367. N-linked (GlcNAc...) asparagine glycosylation is present at N371. H390 is a binding site for Cu cation. A helical membrane pass occupies residues 474–494 (IWPWLIGAAVVGSVLTAVLGG). The Cytoplasmic portion of the chain corresponds to 495-530 (LTSLLCRRKRNQLPEEKQPLLMEKEDYHNLMYQSHL).

Belongs to the tyrosinase family. As to quaternary structure, forms an OPN3-dependent complex with DCT in response to blue light in melanocytes. Cu(2+) is required as a cofactor. Post-translationally, glycosylated.

It localises to the melanosome membrane. The protein resides in the melanosome. It carries out the reaction 2 L-dopa + O2 = 2 L-dopaquinone + 2 H2O. The catalysed reaction is L-tyrosine + O2 = L-dopaquinone + H2O. It catalyses the reaction 2 5,6-dihydroxyindole-2-carboxylate + O2 = 2 indole-5,6-quinone-2-carboxylate + 2 H2O. Functionally, this is a copper-containing oxidase that functions in the formation of pigments such as melanins and other polyphenolic compounds. Catalyzes the initial and rate limiting step in the cascade of reactions leading to melanin production from tyrosine. In addition to hydroxylating tyrosine to DOPA (3,4-dihydroxyphenylalanine), also catalyzes the oxidation of DOPA to DOPA-quinone, and possibly the oxidation of DHI (5,6-dihydroxyindole) to indole-5,6 quinone. This Bos taurus (Bovine) protein is Tyrosinase (TYR).